The primary structure comprises 229 residues: PKHD-type hydroxylase BRADO6316 (229 aa).

A Fe2OG dioxygenase domain is found at 78–180 (QIFPPLFNRY…RVASFFWLQS (103 aa)). Residues His98, Asp100, and His161 each contribute to the Fe cation site. Arg171 contacts 2-oxoglutarate.

Requires Fe(2+) as cofactor. L-ascorbate serves as cofactor.

This is PKHD-type hydroxylase BRADO6316 from Bradyrhizobium sp. (strain ORS 278).